The primary structure comprises 471 residues: Adenosylhomocysteinase (471 aa).

Substrate contacts are provided by threonine 58, aspartate 133, and glutamate 195. 196–198 (TTT) contacts NAD(+). Substrate-binding residues include lysine 225 and aspartate 229. Residues asparagine 230, 259-264 (GFGDVG), glutamate 282, asparagine 317, 338-340 (IGH), and asparagine 383 each bind NAD(+).

Belongs to the adenosylhomocysteinase family. NAD(+) serves as cofactor.

It localises to the cytoplasm. The catalysed reaction is S-adenosyl-L-homocysteine + H2O = L-homocysteine + adenosine. It functions in the pathway amino-acid biosynthesis; L-homocysteine biosynthesis; L-homocysteine from S-adenosyl-L-homocysteine: step 1/1. May play a key role in the regulation of the intracellular concentration of adenosylhomocysteine. This is Adenosylhomocysteinase from Rhodopseudomonas palustris (strain BisB5).